The chain runs to 312 residues: DNA-directed RNA polymerase subunit alpha (312 aa).

The segment at 1 to 229 is alpha N-terminal domain (alpha-NTD); the sequence is MLQYQIDRIE…ELFQPLATVT (229 aa). The segment at 246–312 is alpha C-terminal domain (alpha-CTD); sequence IPLEELNLSV…ISIPQSRTSA (67 aa).

It belongs to the RNA polymerase alpha chain family. In cyanobacteria the RNAP catalytic core is composed of 2 alpha, 1 beta, 1 beta', 1 gamma and 1 omega subunit. When a sigma factor is associated with the core the holoenzyme is formed, which can initiate transcription.

The catalysed reaction is RNA(n) + a ribonucleoside 5'-triphosphate = RNA(n+1) + diphosphate. Its function is as follows. DNA-dependent RNA polymerase catalyzes the transcription of DNA into RNA using the four ribonucleoside triphosphates as substrates. The chain is DNA-directed RNA polymerase subunit alpha from Parasynechococcus marenigrum (strain WH8102).